A 50-amino-acid polypeptide reads, in one-letter code: Large ribosomal subunit protein bL33B (50 aa).

The protein belongs to the bacterial ribosomal protein bL33 family.

This chain is Large ribosomal subunit protein bL33B, found in Streptococcus agalactiae serotype V (strain ATCC BAA-611 / 2603 V/R).